The primary structure comprises 401 residues: Renin-2 (401 aa).

A signal peptide spans 1–25 (MDRRRMPLWALLLLWSPCTFSLPTG). Positions 26-63 (TTFERIPLKKMPSVREILEERGVDMTRLSAEWDVFTKR) are cleaved as a propeptide — activation peptide. One can recognise a Peptidase A1 domain in the interval 83–398 (YYGEIGIGTP…DRHNNRIGFA (316 aa)). The active site involves Asp-101. Intrachain disulfides connect Cys-114/Cys-121 and Cys-277/Cys-281. Asp-286 is an active-site residue. Cys-320 and Cys-357 are oxidised to a cystine.

Belongs to the peptidase A1 family. In terms of assembly, dimer of a heavy chain and a light chain joined by a disulfide bond. Submandibular gland.

Its subcellular location is the secreted. It carries out the reaction Cleavage of Leu-|-Xaa bond in angiotensinogen to generate angiotensin I.. Functionally, renin is a highly specific endopeptidase, related to pepsin, whose only known function is to generate angiotensin I from angiotensinogen in the plasma, initiating a cascade of reactions that produce an elevation of blood pressure and increased sodium retention by the kidney. This Mus musculus (Mouse) protein is Renin-2.